We begin with the raw amino-acid sequence, 396 residues long: Elongation factor Tu (396 aa).

A tr-type G domain is found at 10 to 206; it reads KPHVNVGTIG…ALDTFIPEPT (197 aa). Positions 19–26 are G1; it reads GHVDHGKT. 19–26 lines the GTP pocket; it reads GHVDHGKT. Residue threonine 26 coordinates Mg(2+). The segment at 60–64 is G2; it reads GITIS. Positions 81–84 are G3; the sequence is DCPG. GTP contacts are provided by residues 81–85 and 136–139; these read DCPGH and NKAD. The segment at 136–139 is G4; that stretch reads NKAD. Residues 174 to 176 are G5; the sequence is SAR.

The protein belongs to the TRAFAC class translation factor GTPase superfamily. Classic translation factor GTPase family. EF-Tu/EF-1A subfamily. Monomer.

The protein localises to the cytoplasm. The enzyme catalyses GTP + H2O = GDP + phosphate + H(+). In terms of biological role, GTP hydrolase that promotes the GTP-dependent binding of aminoacyl-tRNA to the A-site of ribosomes during protein biosynthesis. This chain is Elongation factor Tu, found in Xanthomonas oryzae pv. oryzae (strain MAFF 311018).